Here is a 381-residue protein sequence, read N- to C-terminus: L-lactate dehydrogenase (381 aa).

Residues 1 to 380 form the FMN hydroxy acid dehydrogenase domain; that stretch reads MIISASTDYR…SADSLVRELG (380 aa). Position 24 (Y24) interacts with substrate. Residues S106 and Q127 each coordinate FMN. Y129 is a substrate binding site. T155 contributes to the FMN binding site. Substrate is bound at residue R164. Position 251 (K251) interacts with FMN. The Proton acceptor role is filled by H275. R278 is a substrate binding site. 306 to 330 is an FMN binding site; the sequence is DSGIRTGLDVVRMIALGADSVLLGR.

The protein belongs to the FMN-dependent alpha-hydroxy acid dehydrogenase family. Homotetramer. The cofactor is FMN.

Its subcellular location is the cell inner membrane. The enzyme catalyses (S)-lactate + A = pyruvate + AH2. Catalyzes the conversion of L-lactate to pyruvate. Is coupled to the respiratory chain. The protein is L-lactate dehydrogenase of Pseudomonas aeruginosa (strain LESB58).